Consider the following 411-residue polypeptide: Heparan-sulfate 6-O-sulfotransferase 1 (411 aa).

At 1–19 (MRRRRAGGRTMVERASKFV) the chain is on the cytoplasmic side. The chain crosses the membrane as a helical; Signal-anchor for type II membrane protein span at residues 20-37 (LVVAGSACFMLILYQYAG). At 38–411 (PGLSLGAPGG…DYMSHIIEKW (374 aa)) the chain is on the lumenal side. Residue 93–101 (HIQKTGGTT) coordinates 3'-phosphoadenylyl sulfate. Residues 123–124 (KK), Arg-140, Trp-145, and His-150 contribute to the substrate site. His-150 (proton acceptor) is an active-site residue. Arg-185 and Ser-193 together coordinate 3'-phosphoadenylyl sulfate. Substrate is bound by residues His-197 and Trp-204. Asn-264 carries an N-linked (GlcNAc...) asparagine glycan. 317–319 (MQY) contributes to the 3'-phosphoadenylyl sulfate binding site. The N-linked (GlcNAc...) asparagine glycan is linked to Asn-320. 323–324 (RA) is a 3'-phosphoadenylyl sulfate binding site. Positions 352 to 386 (KDLFQQRYQYKRQLERREQRLRNREERLLHRSKEA) form a coiled coil. Residues 380-401 (LHRSKEALPREDPEEPGRVPTE) form a disordered region.

The protein belongs to the sulfotransferase 6 family. Post-translationally, N-glycosylated. In terms of tissue distribution, expressed in fetal brain and liver.

Its subcellular location is the membrane. The enzyme catalyses alpha-D-glucosaminyl-[heparan sulfate](n) + 3'-phosphoadenylyl sulfate = 6-sulfo-alpha-D-glucosaminyl-[heparan sulfate](n) + adenosine 3',5'-bisphosphate + H(+). In terms of biological role, 6-O-sulfation enzyme which catalyzes the transfer of sulfate from 3'-phosphoadenosine 5'-phosphosulfate (PAPS) to position 6 of the N-sulfoglucosamine residue (GlcNS) of heparan sulfate. Critical for normal neuronal development where it may play a role in neuron branching. May also play a role in limb development. May prefer iduronic acid. The polypeptide is Heparan-sulfate 6-O-sulfotransferase 1 (Mus musculus (Mouse)).